The following is a 130-amino-acid chain: Small ribosomal subunit protein uS9 (130 aa).

The disordered stretch occupies residues 98–130 (LKRAGLLTRDPRMKERKKPGLKKARRSPQFSKR). Residues 111–130 (KERKKPGLKKARRSPQFSKR) are compositionally biased toward basic residues.

This sequence belongs to the universal ribosomal protein uS9 family.

This chain is Small ribosomal subunit protein uS9, found in Staphylococcus saprophyticus subsp. saprophyticus (strain ATCC 15305 / DSM 20229 / NCIMB 8711 / NCTC 7292 / S-41).